We begin with the raw amino-acid sequence, 129 residues long: Small ribosomal subunit protein uS13 (129 aa).

A disordered region spans residues 96–129 (GLPVRGQRTSTNARTRKGPRKTVGVSKAAAAAKA).

This sequence belongs to the universal ribosomal protein uS13 family. As to quaternary structure, part of the 30S ribosomal subunit. Forms a loose heterodimer with protein S19. Forms two bridges to the 50S subunit in the 70S ribosome.

In terms of biological role, located at the top of the head of the 30S subunit, it contacts several helices of the 16S rRNA. In the 70S ribosome it contacts the 23S rRNA (bridge B1a) and protein L5 of the 50S subunit (bridge B1b), connecting the 2 subunits; these bridges are implicated in subunit movement. Contacts the tRNAs in the A and P-sites. In Opitutus terrae (strain DSM 11246 / JCM 15787 / PB90-1), this protein is Small ribosomal subunit protein uS13.